The sequence spans 508 residues: NADH-quinone oxidoreductase subunit N 2 (508 aa).

Helical transmembrane passes span 14–34 (SYVA…VIVL), 43–63 (SLVW…WYTA), 90–110 (FTFF…LLSA), 119–139 (GAHM…MFMV), 144–164 (LLTI…LAGI), 179–199 (FLTG…IYGV), 223–243 (GPAL…GFGF), 275–295 (GAAM…APFT), 298–318 (WALI…LVAL), 327–347 (MAYS…ASGL), 353–373 (ISSV…IFAV), 400–420 (AWAL…VGFL), 433–455 (GYLW…YYRV), and 473–493 (TGIS…TIFA).

The protein belongs to the complex I subunit 2 family. As to quaternary structure, NDH-1 is composed of 14 different subunits. Subunits NuoA, H, J, K, L, M, N constitute the membrane sector of the complex.

The protein resides in the cell membrane. The catalysed reaction is a quinone + NADH + 5 H(+)(in) = a quinol + NAD(+) + 4 H(+)(out). NDH-1 shuttles electrons from NADH, via FMN and iron-sulfur (Fe-S) centers, to quinones in the respiratory chain. The immediate electron acceptor for the enzyme in this species is believed to be a menaquinone. Couples the redox reaction to proton translocation (for every two electrons transferred, four hydrogen ions are translocated across the cytoplasmic membrane), and thus conserves the redox energy in a proton gradient. This Symbiobacterium thermophilum (strain DSM 24528 / JCM 14929 / IAM 14863 / T) protein is NADH-quinone oxidoreductase subunit N 2.